A 266-amino-acid polypeptide reads, in one-letter code: Putative carbamate hydrolase RutD (266 aa).

The 102-residue stretch at 14 to 115 (PVVVLISGLG…TMLVSVNGWL (102 aa)) folds into the AB hydrolase-1 domain.

The protein belongs to the AB hydrolase superfamily. Hydrolase RutD family.

The enzyme catalyses carbamate + 2 H(+) = NH4(+) + CO2. Functionally, involved in pyrimidine catabolism. May facilitate the hydrolysis of carbamate, a reaction that can also occur spontaneously. In Shigella flexneri serotype 5b (strain 8401), this protein is Putative carbamate hydrolase RutD.